The chain runs to 143 residues: Transcription antitermination protein NusB (143 aa).

This sequence belongs to the NusB family.

Functionally, involved in transcription antitermination. Required for transcription of ribosomal RNA (rRNA) genes. Binds specifically to the boxA antiterminator sequence of the ribosomal RNA (rrn) operons. The sequence is that of Transcription antitermination protein NusB from Dehalococcoides mccartyi (strain CBDB1).